The following is a 320-amino-acid chain: Homeobox-leucine zipper protein HOX25 (320 aa).

The homeobox DNA-binding region spans 79 to 139 (AAARKRRLTA…NRRARWKTKQ (61 aa)). Residues 138–182 (KQLELDFDRLRAAHDELLAGRTALAADNESLRSQVILLTEKLQAN) are leucine-zipper. Disordered stretches follow at residues 181–209 (ANGK…KSFQ) and 249–282 (DSPE…PSSS). Acidic residues predominate over residues 265–278 (SEDDCGGAGSDDDY).

Belongs to the HD-ZIP homeobox family. Class I subfamily. In terms of tissue distribution, expressed in roots, leaf sheaths and blades and panicles.

It is found in the nucleus. In terms of biological role, probable transcription factor. The chain is Homeobox-leucine zipper protein HOX25 (HOX25) from Oryza sativa subsp. japonica (Rice).